The chain runs to 242 residues: AA9 family lytic polysaccharide monooxygenase F (242 aa).

Residues 1 to 20 form the signal peptide; the sequence is MVQFKLSTASLLALASYAAA. His21 lines the Cu(2+) pocket. The tract at residues 31–53 is disordered; it reads GQTYPGADPHNPNPESPGWQAEN. 2 cysteine pairs are disulfide-bonded: Cys71–Cys192 and Cys112–Cys116. Residue His101 coordinates Cu(2+). O2 contacts are provided by His178 and Gln187. Tyr189 contacts Cu(2+).

This sequence belongs to the polysaccharide monooxygenase AA9 family. The cofactor is Cu(2+).

It localises to the secreted. The enzyme catalyses [(1-&gt;4)-beta-D-glucosyl]n+m + reduced acceptor + O2 = 4-dehydro-beta-D-glucosyl-[(1-&gt;4)-beta-D-glucosyl]n-1 + [(1-&gt;4)-beta-D-glucosyl]m + acceptor + H2O.. In terms of biological role, lytic polysaccharide monooxygenase (LPMO) that depolymerizes crystalline and amorphous polysaccharides via the oxidation of scissile alpha- or beta-(1-4)-glycosidic bonds, yielding C1 or C4 oxidation products. Catalysis by LPMOs requires the reduction of the active-site copper from Cu(II) to Cu(I) by a reducing agent and H(2)O(2) or O(2) as a cosubstrate. Active on hemicelluloses, including xylan, glucomannan, and xyloglucan. Shows clear activity on cellooligosaccharides, generating C4 oxidation products. Has no activity on ivory nut mannan (INM), a linear beta-1,4-linked mannan without substitutions. The polypeptide is AA9 family lytic polysaccharide monooxygenase F (Malbranchea cinnamomea (Thermophilic fungus)).